The following is a 101-amino-acid chain: NADH-quinone oxidoreductase subunit K (101 aa).

3 helical membrane-spanning segments follow: residues L4–L24, I30–F50, and F65–F85.

It belongs to the complex I subunit 4L family. As to quaternary structure, NDH-1 is composed of 14 different subunits. Subunits NuoA, H, J, K, L, M, N constitute the membrane sector of the complex.

It is found in the cell inner membrane. It catalyses the reaction a quinone + NADH + 5 H(+)(in) = a quinol + NAD(+) + 4 H(+)(out). Its function is as follows. NDH-1 shuttles electrons from NADH, via FMN and iron-sulfur (Fe-S) centers, to quinones in the respiratory chain. The immediate electron acceptor for the enzyme in this species is believed to be ubiquinone. Couples the redox reaction to proton translocation (for every two electrons transferred, four hydrogen ions are translocated across the cytoplasmic membrane), and thus conserves the redox energy in a proton gradient. This is NADH-quinone oxidoreductase subunit K from Ruegeria pomeroyi (strain ATCC 700808 / DSM 15171 / DSS-3) (Silicibacter pomeroyi).